Consider the following 529-residue polypeptide: Bifunctional purine biosynthesis protein PurH (529 aa).

The MGS-like domain occupies 1–148 (MQQRRPIRRA…KNHKDVAIVV (148 aa)). K287 carries the N6-acetyllysine modification.

The protein belongs to the PurH family.

It catalyses the reaction (6R)-10-formyltetrahydrofolate + 5-amino-1-(5-phospho-beta-D-ribosyl)imidazole-4-carboxamide = 5-formamido-1-(5-phospho-D-ribosyl)imidazole-4-carboxamide + (6S)-5,6,7,8-tetrahydrofolate. The enzyme catalyses IMP + H2O = 5-formamido-1-(5-phospho-D-ribosyl)imidazole-4-carboxamide. Its pathway is purine metabolism; IMP biosynthesis via de novo pathway; 5-formamido-1-(5-phospho-D-ribosyl)imidazole-4-carboxamide from 5-amino-1-(5-phospho-D-ribosyl)imidazole-4-carboxamide (10-formyl THF route): step 1/1. It participates in purine metabolism; IMP biosynthesis via de novo pathway; IMP from 5-formamido-1-(5-phospho-D-ribosyl)imidazole-4-carboxamide: step 1/1. This chain is Bifunctional purine biosynthesis protein PurH, found in Escherichia coli O139:H28 (strain E24377A / ETEC).